The primary structure comprises 409 residues: MPAKVSVLITVTGMDQPGVTSALFEVLAQHGVELLNVEQVVIRGRLTLGVLVSCPLDVADGTALRDDVAAAIHGVGLDVAIERSDDLPIIRQPSTHTIFVLGRPITAGAFSAVARGVAALGVNIDFIRGISDYPVTGLELRVSVPPGCVGPLQIALTKVAAEEHVDVAVEDYGLAWRTKRLIVFDVDSTLVQGEVIEMLAARAGAQGQVAAITEAAMRGELDFAESLQRRVATLAGLPATVIDDVAEQLELMPGARTTIRTLRRLGFRCGVVSGGFRRIIEPLARELMLDFVASNELEIVDGILTGRVVGPIVDRPGKAKALRDFASQYGVPMEQTVAVGDGANDIDMLGAAGLGIAFNAKPALREVADASLSHPYLDTVLFLLGVTRGEIEAADAGDCGVRRVEIPAD.

ACT domains lie at 8–86 (LITV…RSDD) and 102–174 (GRPI…DYGL). Asp-185 functions as the Nucleophile in the catalytic mechanism. Mg(2+)-binding residues include Asp-185 and Asp-187. The Proton donor role is filled by Asp-187. Residues Glu-194, Arg-230, 273–274 (SG), and Lys-318 each bind substrate. Asp-341 is a binding site for Mg(2+). Asn-344 serves as a coordination point for substrate.

It belongs to the HAD-like hydrolase superfamily. SerB family. Homodimer. The dimeric population shifts to a tetramer in the presence of L-serine, which inactivates the enzyme. Requires Mg(2+) as cofactor. It depends on Mn(2+) as a cofactor.

Its subcellular location is the secreted. It is found in the host cytoplasm. The protein localises to the host cytosol. It carries out the reaction O-phospho-L-serine + H2O = L-serine + phosphate. The enzyme catalyses O-phospho-D-serine + H2O = D-serine + phosphate. The catalysed reaction is O-phospho-L-seryl-[protein] + H2O = L-seryl-[protein] + phosphate. It catalyses the reaction O-phospho-L-threonyl-[protein] + H2O = L-threonyl-[protein] + phosphate. Its pathway is amino-acid biosynthesis; L-serine biosynthesis; L-serine from 3-phospho-D-glycerate: step 3/3. Its activity is regulated as follows. Clofazimine, a drug being evaluated for XDR and MDR tuberculosis, inhibits SerB2 phosphatase activity and reverses the various functional effects described above and interactions with host proteins. Is inhibited by known PSP inhibitors such as chlorpromazine, DL-AP3 and sodium orthovanadate, but not by okadaic acid. By binding to the ACT domains, amino-acids have various effects on enzyme activity: L-serine and L-glycine act as inhibitors, whereas L-lysine, L-tyrosine and L-phenylalanine are activators. High throughput screen has been performed to identify specific PSP inhibitors with activity against intracellular bacteria; the two best hits identified in this screen, clorobiocin and rosaniline, are bactericidal and kill bacteria in infected macrophages in a dose-dependent manner. Catalyzes the dephosphorylation of O-phospho-L-serine into L-serine, a step in the L-serine biosynthetic pathway. Exhibits high specificity for L-phosphoserine compared to substrates like L-phosphothreonine (5% relative activity) and L-phosphotyrosine (1.7% relative activity). Functionally, in the host, induces significant cytoskeleton rearrangements through cofilin dephosphorylation and its subsequent activation, and affects the expression of genes that regulate actin dynamics. It specifically interacts with HSP90, HSP70 and HSP27 that block apoptotic pathways but not with other HSPs. Also interacts with GAPDH. It actively dephosphorylates MAP kinase p38 and NF-kappa B p65 (specifically at Ser-536) that play crucial roles in inflammatory and immune responses. This in turn leads to down-regulation of Interleukin 8, a chemotactic and inflammatory cytokine. Thus might help the pathogen to evade the host's immune response. Exogenous addition of purified SerB2 protein to human THP-1 cells (that can be differentiated into macrophage-like cells) induces microtubule rearrangements; the phosphatase activity is co-related to the elicited rearrangements, while addition of the ACT-domains alone elicits no rearrangements. This Mycobacterium tuberculosis (strain ATCC 25618 / H37Rv) protein is Phosphoserine phosphatase SerB2.